The primary structure comprises 260 residues: Alpha- and beta-fibrinogenase OhS1 (260 aa).

An N-terminal signal peptide occupies residues 1 to 18; the sequence is MALIRVLASLLILQLSYA. The propeptide occupies 19–24; that stretch reads VTPFDR. The 224-residue stretch at 25–248 folds into the Peptidase S1 domain; sequence IIGGFECNEY…YIDWIEGIIA (224 aa). Cystine bridges form between Cys-31–Cys-163, Cys-50–Cys-66, Cys-98–Cys-255, Cys-142–Cys-209, Cys-174–Cys-188, and Cys-199–Cys-224. The N-linked (GlcNAc...) asparagine glycan is linked to Asn-44. The Charge relay system role is filled by His-65. Asn-79 carries N-linked (GlcNAc...) asparagine glycosylation. Asp-110 (charge relay system) is an active-site residue. 2 N-linked (GlcNAc...) asparagine glycosylation sites follow: Asn-117 and Asn-121. The Charge relay system role is filled by Ser-203. Residue Asn-250 is glycosylated (N-linked (GlcNAc...) asparagine).

This sequence belongs to the peptidase S1 family. Snake venom subfamily. As to quaternary structure, monomer. In terms of tissue distribution, expressed by the venom gland.

Its subcellular location is the secreted. Completely inhibited by NPGB, PMSF, diisopropylfluorophosphate (DFP), benzamidine and soybean trypsin inhibitor. Not inhibited by EDTA. Functionally, snake venom serine protease that possesses potent fibrinogenolytic (on both alpha- (FGA) and beta-chains (FGB)) and amidolytic activities. Selectively cleaves Arg-|-Xaa or Lys-|-Xaa bonds. This chain is Alpha- and beta-fibrinogenase OhS1, found in Ophiophagus hannah (King cobra).